A 211-amino-acid chain; its full sequence is Protein YCF54, chloroplastic (211 aa).

Residues 1–80 (MWSVTGALTV…GESTKYHFLV (80 aa)) constitute a chloroplast transit peptide.

This sequence belongs to the ycf54 family. In terms of assembly, interacts with LFNR1 and CRD1/CHL27 in chloroplasts.

Its subcellular location is the plastid. The protein resides in the chloroplast. Functionally, involved in the biosynthesis of chlorophyll; acts probably as a scaffolding factor in the MgProto monomethylester (MgProtoME) cyclase complex to stabilize CRD1/CHL27, the catalytic subunit which catalyzes the formation of a fifth isocyclic ring to tetrapyrroles to form protochlorophyllide. The sequence is that of Protein YCF54, chloroplastic from Arabidopsis thaliana (Mouse-ear cress).